A 339-amino-acid chain; its full sequence is Ketol-acid reductoisomerase (NADP(+)) (339 aa).

A KARI N-terminal Rossmann domain is found at 1–182 (MRVYYDRDAD…GGGRSGVIET (182 aa)). NADP(+) contacts are provided by residues 24 to 27 (YGSQ), arginine 48, serine 51, threonine 53, and 83 to 86 (DELQ). The active site involves histidine 108. NADP(+) is bound at residue glycine 134. Residues 183 to 328 (TFKEECETDL…GKLRAMMPWI (146 aa)) form the KARI C-terminal knotted domain. Mg(2+)-binding residues include aspartate 191, glutamate 195, glutamate 227, and glutamate 231. Residue serine 252 coordinates substrate.

It belongs to the ketol-acid reductoisomerase family. The cofactor is Mg(2+).

It carries out the reaction (2R)-2,3-dihydroxy-3-methylbutanoate + NADP(+) = (2S)-2-acetolactate + NADPH + H(+). The catalysed reaction is (2R,3R)-2,3-dihydroxy-3-methylpentanoate + NADP(+) = (S)-2-ethyl-2-hydroxy-3-oxobutanoate + NADPH + H(+). It participates in amino-acid biosynthesis; L-isoleucine biosynthesis; L-isoleucine from 2-oxobutanoate: step 2/4. It functions in the pathway amino-acid biosynthesis; L-valine biosynthesis; L-valine from pyruvate: step 2/4. In terms of biological role, involved in the biosynthesis of branched-chain amino acids (BCAA). Catalyzes an alkyl-migration followed by a ketol-acid reduction of (S)-2-acetolactate (S2AL) to yield (R)-2,3-dihydroxy-isovalerate. In the isomerase reaction, S2AL is rearranged via a Mg-dependent methyl migration to produce 3-hydroxy-3-methyl-2-ketobutyrate (HMKB). In the reductase reaction, this 2-ketoacid undergoes a metal-dependent reduction by NADPH to yield (R)-2,3-dihydroxy-isovalerate. The protein is Ketol-acid reductoisomerase (NADP(+)) of Brucella canis (strain ATCC 23365 / NCTC 10854 / RM-666).